The chain runs to 457 residues: Exodeoxyribonuclease 7 large subunit (457 aa).

Belongs to the XseA family. Heterooligomer composed of large and small subunits.

Its subcellular location is the cytoplasm. It catalyses the reaction Exonucleolytic cleavage in either 5'- to 3'- or 3'- to 5'-direction to yield nucleoside 5'-phosphates.. Bidirectionally degrades single-stranded DNA into large acid-insoluble oligonucleotides, which are then degraded further into small acid-soluble oligonucleotides. The polypeptide is Exodeoxyribonuclease 7 large subunit (Escherichia coli O127:H6 (strain E2348/69 / EPEC)).